The sequence spans 308 residues: Ornithine carbamoyltransferase (308 aa).

Residues 57-60, Q84, R108, and 135-138 each bind carbamoyl phosphate; these read STRT and HPCQ. L-ornithine-binding positions include N166, D224, and 228–229; that span reads SM. Carbamoyl phosphate contacts are provided by residues 264–265 and R292; that span reads CL.

Belongs to the aspartate/ornithine carbamoyltransferase superfamily. OTCase family.

The protein localises to the cytoplasm. It catalyses the reaction carbamoyl phosphate + L-ornithine = L-citrulline + phosphate + H(+). Its pathway is amino-acid biosynthesis; L-arginine biosynthesis; L-arginine from L-ornithine and carbamoyl phosphate: step 1/3. Its function is as follows. Reversibly catalyzes the transfer of the carbamoyl group from carbamoyl phosphate (CP) to the N(epsilon) atom of ornithine (ORN) to produce L-citrulline. The chain is Ornithine carbamoyltransferase from Ralstonia nicotianae (strain ATCC BAA-1114 / GMI1000) (Ralstonia solanacearum).